We begin with the raw amino-acid sequence, 125 residues long: Cholecystokinin-8 (125 aa).

Positions 1 to 20 are cleaved as a signal peptide; it reads MYSGICSCLFLAVLSSSSLG. The propeptide occupies 21 to 105; it reads QQISGSQHAN…FDPTHRIKDR (85 aa). Sulfotyrosine is present on Y107. Residue F113 is modified to Phenylalanine amide. Positions 114 to 125 are excised as a propeptide; sequence GRRSAEEYEYSS.

This sequence belongs to the gastrin/cholecystokinin family.

It localises to the secreted. In terms of biological role, hypotensive neuropeptide that binds cholecystokinin receptors (CCKAR). This is Cholecystokinin-8 (CCK) from Python molurus (Indian python).